The sequence spans 112 residues: Putative pterin-4-alpha-carbinolamine dehydratase (112 aa).

This sequence belongs to the pterin-4-alpha-carbinolamine dehydratase family.

The enzyme catalyses (4aS,6R)-4a-hydroxy-L-erythro-5,6,7,8-tetrahydrobiopterin = (6R)-L-erythro-6,7-dihydrobiopterin + H2O. The sequence is that of Putative pterin-4-alpha-carbinolamine dehydratase from Shewanella halifaxensis (strain HAW-EB4).